The chain runs to 389 residues: Probable protein phosphatase 2C 12 (389 aa).

Residues 42 to 356 form the PPM-type phosphatase domain; that stretch reads VASLFSQRGK…DDCSAVCLFL (315 aa). Asp77 and Gly78 together coordinate Mn(2+). Residues 119–145 are disordered; that stretch reads AFSDDAAASSSADSSGNSSPQPSASAS. Over residues 121–145 the composition is skewed to low complexity; sequence SDDAAASSSADSSGNSSPQPSASAS. 2 residues coordinate Mn(2+): Asp301 and Asp347.

The protein belongs to the PP2C family. Mg(2+) is required as a cofactor. Requires Mn(2+) as cofactor.

It catalyses the reaction O-phospho-L-seryl-[protein] + H2O = L-seryl-[protein] + phosphate. The enzyme catalyses O-phospho-L-threonyl-[protein] + H2O = L-threonyl-[protein] + phosphate. This is Probable protein phosphatase 2C 12 from Oryza sativa subsp. japonica (Rice).